A 270-amino-acid chain; its full sequence is Phospholysine phosphohistidine inorganic pyrophosphate phosphatase (270 aa).

Mg(2+) contacts are provided by D14 and S16. Substrate contacts are provided by residues 14 to 16 (DVS), 52 to 53 (TN), and K187. D212 lines the Mg(2+) pocket.

It belongs to the HAD-like hydrolase superfamily. Requires Mg(2+) as cofactor.

It is found in the cytoplasm. The protein resides in the nucleus. The enzyme catalyses diphosphate + H2O = 2 phosphate + H(+). Phosphatase that hydrolyzes imidodiphosphate, 3-phosphohistidine and 6-phospholysine. Has broad substrate specificity and can also hydrolyze inorganic diphosphate, but with lower efficiency. In Xenopus laevis (African clawed frog), this protein is Phospholysine phosphohistidine inorganic pyrophosphate phosphatase (lhpp).